We begin with the raw amino-acid sequence, 1237 residues long: Phosphorylase b kinase regulatory subunit alpha, skeletal muscle isoform (1237 aa).

S629, S729, S735, and S758 each carry phosphoserine. The calmodulin-binding stretch occupies residues 810–840 (LTELYGKVGKIRHWGLIRYISGILRKKVEAL). At S972 the chain carries Phosphoserine; by autocatalysis. S981 is modified (phosphoserine). Phosphoserine; by autocatalysis occurs at positions 985 and 1007. S1018 carries the phosphoserine; by PKA modification. Phosphoserine occurs at positions 1020, 1023, and 1030. The segment at 1021–1069 (TESQPNGGHSLGADLMSPSFLSPGTSVTPSSGSFPGHHTSKDSRQGQWQ) is disordered. The span at 1042–1056 (SPGTSVTPSSGSFPG) shows a compositional bias: low complexity. Positions 1060-1100 (SKDSRQGQWQRRRRLDGALNRVPIGFYQKVWKVLQKCHGLS) are calmodulin-binding. The residue at position 1127 (S1127) is a Phosphoserine. A lipid anchor (S-farnesyl cysteine) is attached at C1234.

The protein belongs to the phosphorylase b kinase regulatory chain family. Hexadecamer of 4 heterotetramers, each composed of alpha, beta, gamma, and delta subunits. Alpha (PHKA1 or PHKA2) and beta (PHKB) are regulatory subunits, gamma (PHKG1 or PHKG2) is the catalytic subunit, and delta is calmodulin. Phosphorylation of Ser-1018 by PKA stimulates the dephosphorylation of the beta subunit and, thus, reverses the initial stimulation of PHK by the faster beta-subunit phosphorylation by PKA, that occurs in muscle in response to adrenaline. Post-translationally, cys-1234 is farnesylated, but the C-terminal tripeptide is not removed and the cysteine carboxyl is not methylated. As to expression, isoform 1 predominates in muscle, heart, brain and testis. Isoforms 1 and 2 are expressed in similar quantities in the other tissues. Isoform 3 is highly expressed in slow muscle and heart.

The protein resides in the cell membrane. It participates in glycan biosynthesis; glycogen metabolism. With respect to regulation, by phosphorylation of various serine residues and by calcium. Functionally, phosphorylase b kinase catalyzes the phosphorylation of serine in certain substrates, including troponin I. The alpha chain may bind calmodulin. This is Phosphorylase b kinase regulatory subunit alpha, skeletal muscle isoform (PHKA1) from Oryctolagus cuniculus (Rabbit).